Reading from the N-terminus, the 68-residue chain is Elastase inhibitor AFLEI (68 aa).

C5 and C67 are disulfide-bonded.

It localises to the secreted. Its function is as follows. Elastase inhibitor. Inhibitor of A.flavus elastase with a Ki of 40 nM. Inhibitor of A.fumigatus elastase and human leukocyte elastase. Inhibits the fibrinogenase and collagenase activities of A.flavus elastase. Does not inhibit porcine pancreatic elastase, trypsin, chymotrypsin, thrombin or A.acutus AC1-proteinase. This Aspergillus flavus protein is Elastase inhibitor AFLEI.